We begin with the raw amino-acid sequence, 426 residues long: Adenylosuccinate synthetase (426 aa).

GTP-binding positions include 13–19 (GDEGKGK) and 41–43 (GHT). The active-site Proton acceptor is D14. Mg(2+) contacts are provided by D14 and G41. IMP is bound by residues 14–17 (DEGK), 39–42 (NAGH), T129, R143, Q224, T239, and R303. H42 serves as the catalytic Proton donor. Substrate is bound at residue 299–305 (TTTGRPR). Residues R305, 331 to 333 (KLD), and 414 to 416 (GTG) contribute to the GTP site.

Belongs to the adenylosuccinate synthetase family. In terms of assembly, homodimer. Mg(2+) is required as a cofactor.

It is found in the cytoplasm. The enzyme catalyses IMP + L-aspartate + GTP = N(6)-(1,2-dicarboxyethyl)-AMP + GDP + phosphate + 2 H(+). It functions in the pathway purine metabolism; AMP biosynthesis via de novo pathway; AMP from IMP: step 1/2. In terms of biological role, plays an important role in the de novo pathway of purine nucleotide biosynthesis. Catalyzes the first committed step in the biosynthesis of AMP from IMP. This Caldicellulosiruptor bescii (strain ATCC BAA-1888 / DSM 6725 / KCTC 15123 / Z-1320) (Anaerocellum thermophilum) protein is Adenylosuccinate synthetase.